The following is a 346-amino-acid chain: Elongation factor Ts (346 aa).

The involved in Mg(2+) ion dislocation from EF-Tu stretch occupies residues 80-83; that stretch reads TDFV.

This sequence belongs to the EF-Ts family.

It is found in the cytoplasm. Functionally, associates with the EF-Tu.GDP complex and induces the exchange of GDP to GTP. It remains bound to the aminoacyl-tRNA.EF-Tu.GTP complex up to the GTP hydrolysis stage on the ribosome. The polypeptide is Elongation factor Ts (Streptococcus thermophilus (strain CNRZ 1066)).